The primary structure comprises 69 residues: A-kinase anchor protein inhibitor 1 (69 aa).

Residues 39–69 (QESLRREGRPGDSRAWGQLGGCELTKKHEKK) are disordered. The span at 41-50 (SLRREGRPGD) shows a compositional bias: basic and acidic residues.

As to quaternary structure, binds cAMP-dependent protein kinase (PKA). Interacts specifically with RII-regulatory subunits of PKA (PRKAR2A and PRKAR2B). In terms of tissue distribution, preferentially expressed in the neural tissues.

Functionally, protein kinase A (PKA)-binding protein. Binds to type II regulatory subunits of protein kinase A (PKA) and may block the A-kinase anchoring protein (AKAP)-mediated subcellular localization of PKA. The protein is A-kinase anchor protein inhibitor 1 of Mus musculus (Mouse).